The sequence spans 554 residues: Hydroxylamine reductase (554 aa).

4 residues coordinate [2Fe-2S] cluster: Cys3, Cys6, Cys18, and Cys25. His252, Glu276, Cys320, Cys408, Cys436, Cys461, Glu495, and Lys497 together coordinate hybrid [4Fe-2O-2S] cluster. Residue Cys408 is modified to Cysteine persulfide.

This sequence belongs to the HCP family. It depends on [2Fe-2S] cluster as a cofactor. The cofactor is hybrid [4Fe-2O-2S] cluster.

Its subcellular location is the cytoplasm. The enzyme catalyses A + NH4(+) + H2O = hydroxylamine + AH2 + H(+). Its function is as follows. Catalyzes the reduction of hydroxylamine to form NH(3) and H(2)O. The protein is Hydroxylamine reductase of Shewanella baltica (strain OS223).